Reading from the N-terminus, the 280-residue chain is Killer cell lectin-like receptor 7 (280 aa).

Residues 1–44 (MSEQEVTYSTVRFHESSRLQKLVRTEEPQRPREACYREYSVPWK) lie on the Cytoplasmic side of the membrane. The helical; Signal-anchor for type II membrane protein transmembrane segment at 45–66 (LIVIACGILCFLLLVTVALLAI) threads the bilayer. Topologically, residues 67 to 280 (TIFQHSQQKH…CGKRLDKFPH (214 aa)) are extracellular. An N-linked (GlcNAc...) asparagine glycan is attached at Asn-104. A C-type lectin domain is found at 156 to 275 (GFEKYWFCYG…SYICICGKRL (120 aa)). 4 disulfide bridges follow: Cys-163/Cys-168, Cys-181/Cys-269, Cys-185/Cys-271, and Cys-250/Cys-263. N-linked (GlcNAc...) asparagine glycosylation is present at Asn-239.

As to quaternary structure, homodimer; disulfide-linked.

The protein localises to the membrane. Receptor on natural killer (NK) cells for class I MHC. The protein is Killer cell lectin-like receptor 7 (Klra7) of Mus musculus (Mouse).